A 199-amino-acid chain; its full sequence is GTP-binding protein Di-Ras2 (199 aa).

GTP-binding positions include 14–21 (GAGGVGKS), 33–39 (RESYIPT), 61–65 (DTTGS), and 121–124 (NKCD). Ser35 is modified (phosphoserine). Residues 36–44 (YIPTVEDTY) carry the Effector region motif. Ser126 carries the post-translational modification Phosphoserine. Residue 152–153 (AK) participates in GTP binding. Cysteine methyl ester is present on Cys196. Cys196 carries S-geranylgeranyl cysteine lipidation. Residues 197–199 (VIM) constitute a propeptide, removed in mature form.

The protein belongs to the small GTPase superfamily. Di-Ras family. In terms of processing, ubiquitinated by the ECS(ASB11) complex via 'Lys-11'-linked ubiquitin chains, leading to its degradation by the proteasome.

It localises to the cell membrane. The catalysed reaction is GTP + H2O = GDP + phosphate + H(+). Displays low GTPase activity and exists predominantly in the GTP-bound form. The chain is GTP-binding protein Di-Ras2 (DIRAS2) from Macaca fascicularis (Crab-eating macaque).